Reading from the N-terminus, the 362-residue chain is Prostaglandin E2 receptor EP2 subtype (362 aa).

Residues 1–24 (MDNFLNDSKLMEDCKSRQWLLSGE) lie on the Extracellular side of the membrane. Asparagine 6 carries N-linked (GlcNAc...) asparagine glycosylation. The chain crosses the membrane as a helical span at residues 25-48 (SPAISSVMFSAGVLGNLIALALLA). Topologically, residues 49–66 (RRWRGDTGCSAGSRTSIS) are cytoplasmic. A helical membrane pass occupies residues 67 to 92 (LFHVLVTELVLTDLLGTCLISPVVLA). Residues 93 to 112 (SYSRNQTLVALAPESHACTY) are Extracellular-facing. A disulfide bridge connects residues cysteine 110 and cysteine 188. Residues 113–133 (FAFTMTFFSLATMLMLFAMAL) form a helical membrane-spanning segment. The Cytoplasmic segment spans residues 134-152 (ERYLSIGYPYFYRRHLSRR). The helical transmembrane segment at 153 to 177 (GGLAVLPVIYGASLLFCSLPLLNYG) threads the bilayer. At 178-199 (EYVQYCPGTWCFIRHGRTAYLQ) the chain is on the extracellular side. A helical transmembrane segment spans residues 200–224 (LYATMLLLLIVAVLACNISVILNLI). Topologically, residues 225–262 (RMHRRSRRSRCGLSGSSLRGPGSRRRGERTSMAEETDH) are cytoplasmic. The segment at 234–255 (RCGLSGSSLRGPGSRRRGERTS) is disordered. The span at 235 to 245 (CGLSGSSLRGP) shows a compositional bias: low complexity. The chain crosses the membrane as a helical span at residues 263-286 (LILLAIMTITFAICSLPFTIFAYM). At 287–299 (DETSSLKEKWDLR) the chain is on the extracellular side. Residues 300–323 (ALRFLSVNSIIDPWVFAILRPPVL) traverse the membrane as a helical segment. Residues 324-362 (RLMRSVLCCRTSLRTQEAQQTSCSTQSSASKQTDLCGQL) lie on the Cytoplasmic side of the membrane.

It belongs to the G-protein coupled receptor 1 family.

The protein localises to the cell membrane. Functionally, receptor for prostaglandin E2 (PGE2). The activity of this receptor is mediated by G(s) proteins that stimulate adenylate cyclase. The subsequent raise in intracellular cAMP is responsible for the relaxing effect of this receptor on smooth muscle. The protein is Prostaglandin E2 receptor EP2 subtype (Ptger2) of Mus musculus (Mouse).